Reading from the N-terminus, the 131-residue chain is L-aspartate semialdehyde sulfurtransferase iron-sulfur subunit (131 aa).

2 4Fe-4S ferredoxin-type domains span residues 73–102 and 103–131; these read KVIK…MDED and YNVV…EIFE. Residues Cys-82, Cys-85, Cys-88, Cys-92, Cys-112, Cys-115, Cys-118, and Cys-122 each contribute to the [4Fe-4S] cluster site.

As to quaternary structure, may form a complex with MJ0100. [4Fe-4S] cluster serves as cofactor.

The protein operates within amino-acid biosynthesis. In terms of biological role, required for O-acetylhomoserine sulfhydrylase (OAHS)-independent homocysteine (Hcy) biosynthesis. Together with MJ0100, catalyzes the condensation of sulfide with aspartate semialdehyde to generate homocysteine. May be involved in the reduction of the disulfide formed in MJ0100. The sequence is that of L-aspartate semialdehyde sulfurtransferase iron-sulfur subunit from Methanocaldococcus jannaschii (strain ATCC 43067 / DSM 2661 / JAL-1 / JCM 10045 / NBRC 100440) (Methanococcus jannaschii).